Consider the following 299-residue polypeptide: Streptogrisin-B (299 aa).

An N-terminal signal peptide occupies residues 1 to 38 (MRIKRTSNRSNAARRVRTTAVLAGLAAVAALAVPTANA). Residues 39–114 (ETPRTFSANQ…ERTPGKFTKL (76 aa)) constitute a propeptide that is removed on maturation. A disulfide bond links C128 and C148. Catalysis depends on charge relay system residues H147, D177, and S255. A disulfide bond links C249 and C276.

This sequence belongs to the peptidase S1 family. Monomer.

It catalyses the reaction Hydrolysis of proteins with trypsin-like specificity.. Its function is as follows. Has a primary specificity for large aliphatic or aromatic amino acids. This chain is Streptogrisin-B (sprB), found in Streptomyces griseus.